The primary structure comprises 185 residues: Anterior gradient protein 2 (185 aa).

The signal sequence occupies residues 1 to 18 (MQTGLSLACLVLLCSVLG). Residues 25–45 (PKRQAGATDTNGAAKSEPAPV) are disordered.

It belongs to the AGR family. In terms of tissue distribution, expressed in the anterior of the dorsal ectoderm from late gastrula stages onwards. Becomes restricted to the cement gland anlage at the onset of neurulation (stages 13 to 14) and expressed exclusively in the cement gland from stage 18 onwards, with transient expression in the hatching gland during tailbud stages.

It localises to the secreted. Functionally, involved in cement gland formation; probably specifies dorsal ectoderm to acquire an anterior fate such as cement gland and forebrain. Signals via the FGF pathway. In Xenopus laevis (African clawed frog), this protein is Anterior gradient protein 2 (ag2).